Reading from the N-terminus, the 464-residue chain is D-2-hydroxyglutarate dehydrogenase (464 aa).

Positions 37 to 216 (FAPAPSAIVF…VEATMRLERQ (180 aa)) constitute an FAD-binding PCMH-type domain. Residues R325, S329, and K339 each contribute to the (R)-2-hydroxyglutarate site. 3 residues coordinate (R)-malate: R325, S329, and K339. Residues H374 and H381 each contribute to the Zn(2+) site. Residue N383 participates in (R)-2-hydroxyglutarate binding. Residue E420 coordinates Zn(2+). (R)-2-hydroxyglutarate is bound at residue H421. H421 is a (R)-malate binding site.

This sequence belongs to the FAD-binding oxidoreductase/transferase type 4 family. In terms of assembly, homodimer. FAD is required as a cofactor.

It carries out the reaction (R)-2-hydroxyglutarate + A = 2-oxoglutarate + AH2. The enzyme catalyses (R)-malate + A = oxaloacetate + AH2. Its activity is regulated as follows. Activated by Zn(2+) ions at low concentrations (10 uM) and inhibited by Zn(2+), Fe(2+) and Ni(2+) at high concentrations (10 mM). Functionally, catalyzes the dehydrogenation of (R)-2-hydroxyglutarate (D-2-hydroxyglutarate or D-2-HG) to 2-oxoglutarate and of (R)-malate (D-malate) to oxaloacetate. Is functionally tied to L-serine biosynthesis, via its coupling with the D-3-phosphoglycerate dehydrogenase SerA, encoded by the adjacent gene in the locus. Is required for the utilization of D-2-hydroxyglutarate as well as D-malate as the sole carbon source for growth of P.stutzeri. Active in vitro with artificial electron acceptors such as 2,6-dichlorophenolindophenol (DCPIP) and appears to couple with electron transfer flavoprotein (ETF) for efficient oxidation of both D-2-hydroxyglutarate and D-malate in vivo. Cannot catalyze the oxidation of L-2-hydroxyglutarate, D-lactate, D-tartrate, D-2-hydroxybutanoate, D-mandelate, D-glycerate and D-phenyllactate. In Stutzerimonas stutzeri (strain A1501) (Pseudomonas stutzeri), this protein is D-2-hydroxyglutarate dehydrogenase.